Reading from the N-terminus, the 350-residue chain is MQTYGNPNPTYGWWAGNAGTTNRSGKFLAAHIAHTGLMAFWAGSFTLFELSRYDPSVPMGHQPLVALPHLATLGIGVGDGGVITDTYPIVVTAVLHLVLSMVYAAGGLMHSLLFNGDIGEMGVKWARKFDFKWDDPDKLTFILGHHLFLLGLGNVQFVEWAKYYGLYDNAEGVVRTVVPNLNIGMVWNAQFNFLAINSLEDVMGGHAFLALFMMSGGLWHIVTKQAGEYTTFKGKGILSAEAQLSWALAGVGWMALVAAFWCASNTTIYPDTFFGEVLDLKFSISPYWVDTANLPEGTYTSRAWLTNIHYYLGFFYIQGHLWHALRALGFDFKRVSNAIGNADSATITLN.

The next 6 membrane-spanning stretches (helical) occupy residues 27–47 (FLAA…SFTL), 89–109 (IVVT…GGLM), 141–161 (FILG…VEWA), 202–222 (VMGG…WHIV), 244–264 (LSWA…WCAS), and 305–325 (LTNI…WHAL).

This sequence belongs to the PsbB/PsbC family. IsiA/Pcb subfamily. As to quaternary structure, the antenna complex consists of divinyl chlorophylls (a and b) and divinyl chlorophyll a/b binding proteins. Under iron-starvation forms a complex with PSI, consisting of a PSI trimer surrounded by a ring composed of 18 PcbB subunits. Requires divinyl chlorophyll a as cofactor. It depends on divinyl chlorophyll b as a cofactor.

The protein localises to the cellular thylakoid membrane. The antenna complex functions as a light receptor, it captures and delivers excitation energy to photosystems I. The Prochlorales pcb genes are not related to higher plant LHCs. This Prochlorococcus marinus (strain MIT 9313) protein is Divinyl chlorophyll a/b light-harvesting protein PcbB (pcbB).